The chain runs to 525 residues: MRKILVLIFCLNLFGVTQQAAAEENKTVDVVLIGGGIMSATLGTYLHELEPNWSIDMYERMNGVAEESSNGWNNAGTGHSAFAEMNYTPEKKDGSIDISKAVVVNESFEISRQFWSYQVKNNVLKDPKSFINSVPHMSFVWGDDNVNFLRKRYAALQHSTLFRGMEYSEDANQIKQWAPLVMDGRDPKQKIAATRMPLGTDVNFGVITHQLVDTLTKNPNFKLNLSHEVRDIKRNDDNTWRVTVADLTRDGKETTVNAKFVFIGAGGASLTLLQKTGIPEAEGYGAFPVGGQFLVTTNPEIANQHLAKVYGLASVGSPPMSVPHLDTRMLDGKRVLLFGPFATFSGKFLKNGSLFDLLHSLSTSNLMPMTHVGLDNFDLVKYLVGQLMMNDDDRFAALKEYFPEAKQADWKLWTAGQRVQIIKKDDEKGGLLQFGTEVVSAKDGSIAALLGASPGASTAAPIMLHLMETVFKDKVATPEWQSKLKEIIPSYGHKLNGDIEMTNKIRGYTSSVLQLDYIEVKPETN.

The protein belongs to the MQO family. FAD is required as a cofactor.

The enzyme catalyses (S)-malate + a quinone = a quinol + oxaloacetate. Its pathway is carbohydrate metabolism; tricarboxylic acid cycle; oxaloacetate from (S)-malate (quinone route): step 1/1. The sequence is that of Probable malate:quinone oxidoreductase from Serratia proteamaculans (strain 568).